Reading from the N-terminus, the 207-residue chain is Thiamine-phosphate synthase (207 aa).

4-amino-2-methyl-5-(diphosphooxymethyl)pyrimidine-binding positions include 38-42 (QYRNK) and asparagine 70. Mg(2+) contacts are provided by aspartate 71 and aspartate 90. Serine 109 is a binding site for 4-amino-2-methyl-5-(diphosphooxymethyl)pyrimidine. Residue 136–138 (TAT) participates in 2-[(2R,5Z)-2-carboxy-4-methylthiazol-5(2H)-ylidene]ethyl phosphate binding. Lysine 139 contacts 4-amino-2-methyl-5-(diphosphooxymethyl)pyrimidine. Residues glycine 165 and 185-186 (VS) each bind 2-[(2R,5Z)-2-carboxy-4-methylthiazol-5(2H)-ylidene]ethyl phosphate.

Belongs to the thiamine-phosphate synthase family. Mg(2+) serves as cofactor.

The catalysed reaction is 2-[(2R,5Z)-2-carboxy-4-methylthiazol-5(2H)-ylidene]ethyl phosphate + 4-amino-2-methyl-5-(diphosphooxymethyl)pyrimidine + 2 H(+) = thiamine phosphate + CO2 + diphosphate. It catalyses the reaction 2-(2-carboxy-4-methylthiazol-5-yl)ethyl phosphate + 4-amino-2-methyl-5-(diphosphooxymethyl)pyrimidine + 2 H(+) = thiamine phosphate + CO2 + diphosphate. The enzyme catalyses 4-methyl-5-(2-phosphooxyethyl)-thiazole + 4-amino-2-methyl-5-(diphosphooxymethyl)pyrimidine + H(+) = thiamine phosphate + diphosphate. The protein operates within cofactor biosynthesis; thiamine diphosphate biosynthesis; thiamine phosphate from 4-amino-2-methyl-5-diphosphomethylpyrimidine and 4-methyl-5-(2-phosphoethyl)-thiazole: step 1/1. Its function is as follows. Condenses 4-methyl-5-(beta-hydroxyethyl)thiazole monophosphate (THZ-P) and 2-methyl-4-amino-5-hydroxymethyl pyrimidine pyrophosphate (HMP-PP) to form thiamine monophosphate (TMP). The polypeptide is Thiamine-phosphate synthase (Xanthomonas campestris pv. campestris (strain 8004)).